Consider the following 340-residue polypeptide: Guanine nucleotide-binding protein G(I)/G(S)/G(T) subunit beta-3 (340 aa).

7 WD repeats span residues 53–83 (GHLAKIYAMHWATDSKLLVSASQDGKLIVWD), 95–125 (LRSSWVMTCAYAPSGNFVACGGLDNMCSIYN), 141–170 (AHTGYLSCCRFLDDNNIVTSSGDTTCALWD), 182–212 (GHTGDCMSLAVSPDFNLFISGACDASAKLWD), 224–254 (GHESDINAICFFPNGEAICTGSDDASCRLFD), 268–298 (SIICGITSVAFSLSGRLLFAGYDDFNCNVWD), and 310–340 (GHDNRVSCLGVTADGMAVATGSWDSFLKIWN).

Belongs to the WD repeat G protein beta family. G proteins are composed of 3 units, alpha, beta and gamma. Interacts with RASD2.

Guanine nucleotide-binding proteins (G proteins) are involved as a modulator or transducer in various transmembrane signaling systems. The beta and gamma chains are required for the GTPase activity, for replacement of GDP by GTP, and for G protein-effector interaction. In Homo sapiens (Human), this protein is Guanine nucleotide-binding protein G(I)/G(S)/G(T) subunit beta-3 (GNB3).